Reading from the N-terminus, the 90-residue chain is YcgL domain-containing protein YpsIP31758_2009 (90 aa).

Positions Met1–Leu85 constitute a YcgL domain.

The sequence is that of YcgL domain-containing protein YpsIP31758_2009 from Yersinia pseudotuberculosis serotype O:1b (strain IP 31758).